The primary structure comprises 227 residues: Orotidine 5'-phosphate decarboxylase (227 aa).

Substrate-binding positions include Asp8, Lys30, 57 to 66, Thr116, Arg177, Gln186, Gly206, and Arg207; that span reads DLKFHDIPNT. Lys59 (proton donor) is an active-site residue.

It belongs to the OMP decarboxylase family. Type 1 subfamily. In terms of assembly, homodimer.

The catalysed reaction is orotidine 5'-phosphate + H(+) = UMP + CO2. Its pathway is pyrimidine metabolism; UMP biosynthesis via de novo pathway; UMP from orotate: step 2/2. Its function is as follows. Catalyzes the decarboxylation of orotidine 5'-monophosphate (OMP) to uridine 5'-monophosphate (UMP). The sequence is that of Orotidine 5'-phosphate decarboxylase from Acinetobacter baumannii (strain AB307-0294).